A 90-amino-acid polypeptide reads, in one-letter code: MNKAIITVVGQDTVGIIARVCTYLSQHNVNVLDISQTIIDGYFNMMMIVDYANADKDFGAMVGNLEDLGDDIGVRIRCQREEIFTKMHRI.

The ACT domain occupies 5-79 (IITVVGQDTV…DDIGVRIRCQ (75 aa)).

This sequence belongs to the UPF0237 family.

The protein is UPF0237 protein BL1209.1 of Bifidobacterium longum (strain NCC 2705).